The chain runs to 130 residues: DNA-directed RNA polymerase subunit omega (130 aa).

Disordered stretches follow at residues 80–99 (PEPDTVPLIGSAGASVDADD) and 110–130 (EELLKGLEGLAPREEQPEEDE). Residues 110–124 (EELLKGLEGLAPREE) show a composition bias toward basic and acidic residues.

The protein belongs to the RNA polymerase subunit omega family. The RNAP catalytic core consists of 2 alpha, 1 beta, 1 beta' and 1 omega subunit. When a sigma factor is associated with the core the holoenzyme is formed, which can initiate transcription.

It carries out the reaction RNA(n) + a ribonucleoside 5'-triphosphate = RNA(n+1) + diphosphate. In terms of biological role, promotes RNA polymerase assembly. Latches the N- and C-terminal regions of the beta' subunit thereby facilitating its interaction with the beta and alpha subunits. The sequence is that of DNA-directed RNA polymerase subunit omega from Nitrobacter hamburgensis (strain DSM 10229 / NCIMB 13809 / X14).